Reading from the N-terminus, the 452-residue chain is Chloride/fluoride channel protein (452 aa).

10 helical membrane-spanning segments follow: residues 23–43 (WLAL…LFLL), 57–77 (WVIW…HLIG), 97–117 (IVPL…HLFG), 160–180 (FASV…VLAI), 188–208 (LFPC…WGVV), 222–242 (LWSV…GLLF), 264–284 (PFAG…NHYI), 315–337 (VFTV…FYIG), 344–364 (LAPL…VAVF), and 386–408 (IAPL…GIYH).

Belongs to the chloride channel (TC 2.A.49) family.

The protein localises to the cell membrane. In terms of biological role, transports chloride and fluoride with similar efficiency. The chain is Chloride/fluoride channel protein (eriC) from Pseudomonas syringae pv. tomato (strain ATCC BAA-871 / DC3000).